The primary structure comprises 249 residues: Phosphate import ATP-binding protein PstB (249 aa).

Residues 3–244 enclose the ABC transporter domain; the sequence is IEANDVHVYY…PKKKRTQNYI (242 aa). 35 to 42 lines the ATP pocket; that stretch reads GPSGCGKS.

It belongs to the ABC transporter superfamily. Phosphate importer (TC 3.A.1.7) family. The complex is composed of two ATP-binding proteins (PstB), two transmembrane proteins (PstC and PstA) and a solute-binding protein (PstS).

It localises to the cell inner membrane. The catalysed reaction is phosphate(out) + ATP + H2O = ADP + 2 phosphate(in) + H(+). Part of the ABC transporter complex PstSACB involved in phosphate import. Responsible for energy coupling to the transport system. This Cytophaga hutchinsonii (strain ATCC 33406 / DSM 1761 / CIP 103989 / NBRC 15051 / NCIMB 9469 / D465) protein is Phosphate import ATP-binding protein PstB.